The chain runs to 139 residues: Putative pre-16S rRNA nuclease (139 aa).

The protein belongs to the YqgF nuclease family.

Its subcellular location is the cytoplasm. Could be a nuclease involved in processing of the 5'-end of pre-16S rRNA. The sequence is that of Putative pre-16S rRNA nuclease from Streptococcus mutans serotype c (strain ATCC 700610 / UA159).